The primary structure comprises 347 residues: Olfactory receptor 13C3 (347 aa).

At 1 to 55 (MIVQLICTVCFLAVNTFHVRSSFDFLKADDMGEINQTLVSEFLLLGLSGYPKIEI) the chain is on the extracellular side. N35 is a glycosylation site (N-linked (GlcNAc...) asparagine). Residues 56-76 (VYFALILVMYLVILIGNGVLI) traverse the membrane as a helical segment. Residues 77-84 (IASIFDSH) lie on the Cytoplasmic side of the membrane. The helical transmembrane segment at 85-105 (FHTPMYFFLGNLSFLDICYTS) threads the bilayer. The Extracellular portion of the chain corresponds to 106–129 (SSVPSTLVSLISKKRNISFSGCAV). Cysteines 127 and 219 form a disulfide. A helical transmembrane segment spans residues 130-150 (QMFFGFAMGSTECLLLGMMAF). The Cytoplasmic segment spans residues 151–169 (DRYVAICNPLRYPIILSKV). A helical membrane pass occupies residues 170–190 (AYVLMASVSWLSGGINSAVQT). Topologically, residues 191–227 (LLAMRLPFCGNNIINHFACEILAVLKLACADISLNII) are extracellular. A helical transmembrane segment spans residues 228-247 (TMVISNMAFLVLPLMVIFFS). At 248-267 (YMFILYTILQMNSATGRRKA) the chain is on the cytoplasmic side. The helical transmembrane segment at 268 to 288 (FSTCSAHLTVVIIFYGTIFFM) threads the bilayer. Over 289–307 (YAKPKSQDLIGEEKLQALD) the chain is Extracellular. A helical transmembrane segment spans residues 308 to 328 (KLISLFYGVVTPMLNPILYSL). Topologically, residues 329–347 (RNKDVKAAVKYLLNKKPIH) are cytoplasmic.

It belongs to the G-protein coupled receptor 1 family.

The protein resides in the cell membrane. Functionally, odorant receptor. This chain is Olfactory receptor 13C3 (OR13C3), found in Homo sapiens (Human).